The following is a 1044-amino-acid chain: GRB10-interacting GYF protein 1 (1044 aa).

Residues S24, S28, S137, and S157 each carry the phosphoserine modification. Disordered regions lie at residues 104–290 (GKGA…DGLP) and 306–424 (ASGA…LEDE). Composition is skewed to basic and acidic residues over residues 148–179 (NPRE…RSGF) and 186–203 (PRKE…SLRE). S228 is subject to Phosphoserine. Basic and acidic residues-rich tracts occupy residues 237–265 (GWRE…EDGR) and 316–332 (GPKE…FRGL). Positions 333 to 350 (EEEEEEEEEPSEGVDEER) are enriched in acidic residues. S343 is subject to Phosphoserine. Positions 366-379 (NSSSPSSLPALGPL) are enriched in low complexity. Residues 389 to 403 (AVEKELPPAEGDELR) are compositionally biased toward basic and acidic residues. Position 408 is a phosphoserine (S408). The GYF domain occupies 476 to 524 (ARKWFYKDPQGEIQGPFTTQEMAEWFQAGYFSMSLLVKRGCDEGFQPLG). A phosphoserine mark is found at S540 and S634. Residues 692-706 (KREEEERKRREEKRR) show a composition bias toward basic and acidic residues. 6 disordered regions span residues 692–721 (KREE…RQEE), 820–842 (EAGP…LGLW), 855–883 (SLGL…RKKT), 966–987 (QKAS…QEAW), 1000–1019 (NHST…RALM), and 1024–1044 (PSIL…VDDY). Gly residues predominate over residues 829-839 (DKSGGSSGGNL). Composition is skewed to low complexity over residues 855-877 (SLGL…LSGR) and 970-984 (QQRQ…QQQQ). S863 bears the Phosphoserine mark.

The protein belongs to the GIGYF family. As to quaternary structure, interacts with GRB10. This transient binding is increased under IGF1 stimulation and leads to recruitment of GIGYF1/GRB10 complex to IGF1 receptor. Interacts with DDX6. In terms of tissue distribution, ubiquitous. Lower expression in skeletal muscle, liver and testis.

In terms of biological role, may act cooperatively with GRB10 to regulate tyrosine kinase receptor signaling. May increase IGF1 receptor phosphorylation under IGF1 stimulation as well as phosphorylation of IRS1 and SHC1. This is GRB10-interacting GYF protein 1 (Gigyf1) from Mus musculus (Mouse).